The following is a 592-amino-acid chain: Putative esterase (592 aa).

A helical transmembrane segment spans residues 12–32; the sequence is LTLIAYLSVLMGVSVYFYVLI. N-linked (GlcNAc...) asparagine; by host glycans are attached at residues asparagine 68, asparagine 83, asparagine 95, asparagine 447, and asparagine 510. Histidine 513 functions as the Charge relay system in the catalytic mechanism. The N-linked (GlcNAc...) asparagine; by host glycan is linked to asparagine 528.

It belongs to the type-B carboxylesterase/lipase family.

The protein localises to the membrane. The enzyme catalyses a carboxylic ester + H2O = an alcohol + a carboxylate + H(+). The polypeptide is Putative esterase (Spodoptera frugiperda (Fall armyworm)).